The following is a 181-amino-acid chain: Ribulose bisphosphate carboxylase small subunit, chloroplastic (181 aa).

A chloroplast-targeting transit peptide spans 1 to 56 (MASISSSAIATVNRTTSTQASLAAPFTGLKSNVAFPVTKKANNDFSSLPSNGGRVQ).

Belongs to the RuBisCO small chain family. In terms of assembly, heterohexadecamer of 8 large and 8 small subunits.

It localises to the plastid. The protein localises to the chloroplast. Functionally, ruBisCO catalyzes two reactions: the carboxylation of D-ribulose 1,5-bisphosphate, the primary event in carbon dioxide fixation, as well as the oxidative fragmentation of the pentose substrate. Both reactions occur simultaneously and in competition at the same active site. Although the small subunit is not catalytic it is essential for maximal activity. The chain is Ribulose bisphosphate carboxylase small subunit, chloroplastic from Lactuca sativa (Garden lettuce).